Here is a 290-residue protein sequence, read N- to C-terminus: 4-diphosphocytidyl-2-C-methyl-D-erythritol kinase (290 aa).

Lysine 8 is an active-site residue. Residue 92–102 (PISAGLAGGST) coordinates ATP. The active site involves aspartate 134.

Belongs to the GHMP kinase family. IspE subfamily.

It catalyses the reaction 4-CDP-2-C-methyl-D-erythritol + ATP = 4-CDP-2-C-methyl-D-erythritol 2-phosphate + ADP + H(+). It participates in isoprenoid biosynthesis; isopentenyl diphosphate biosynthesis via DXP pathway; isopentenyl diphosphate from 1-deoxy-D-xylulose 5-phosphate: step 3/6. Functionally, catalyzes the phosphorylation of the position 2 hydroxy group of 4-diphosphocytidyl-2C-methyl-D-erythritol. The chain is 4-diphosphocytidyl-2-C-methyl-D-erythritol kinase from Caldicellulosiruptor saccharolyticus (strain ATCC 43494 / DSM 8903 / Tp8T 6331).